Reading from the N-terminus, the 237-residue chain is Phosphoribosylaminoimidazole-succinocarboxamide synthase (237 aa).

Belongs to the SAICAR synthetase family.

The enzyme catalyses 5-amino-1-(5-phospho-D-ribosyl)imidazole-4-carboxylate + L-aspartate + ATP = (2S)-2-[5-amino-1-(5-phospho-beta-D-ribosyl)imidazole-4-carboxamido]succinate + ADP + phosphate + 2 H(+). It participates in purine metabolism; IMP biosynthesis via de novo pathway; 5-amino-1-(5-phospho-D-ribosyl)imidazole-4-carboxamide from 5-amino-1-(5-phospho-D-ribosyl)imidazole-4-carboxylate: step 1/2. This is Phosphoribosylaminoimidazole-succinocarboxamide synthase from Sodalis glossinidius (strain morsitans).